Here is a 174-residue protein sequence, read N- to C-terminus: Co-chaperone protein HscB homolog (174 aa).

The J domain maps to 2–74 (NYFELFKFPP…IRRAEHMLSL (73 aa)).

This sequence belongs to the HscB family. As to quaternary structure, interacts with HscA and stimulates its ATPase activity.

Functionally, co-chaperone involved in the maturation of iron-sulfur cluster-containing proteins. Seems to help targeting proteins to be folded toward HscA. This is Co-chaperone protein HscB homolog from Shewanella baltica (strain OS195).